A 219-amino-acid polypeptide reads, in one-letter code: Probable nicotinate-nucleotide adenylyltransferase (219 aa).

This sequence belongs to the NadD family.

The catalysed reaction is nicotinate beta-D-ribonucleotide + ATP + H(+) = deamido-NAD(+) + diphosphate. It participates in cofactor biosynthesis; NAD(+) biosynthesis; deamido-NAD(+) from nicotinate D-ribonucleotide: step 1/1. Functionally, catalyzes the reversible adenylation of nicotinate mononucleotide (NaMN) to nicotinic acid adenine dinucleotide (NaAD). The chain is Probable nicotinate-nucleotide adenylyltransferase from Chromohalobacter salexigens (strain ATCC BAA-138 / DSM 3043 / CIP 106854 / NCIMB 13768 / 1H11).